Consider the following 513-residue polypeptide: L-arabinose transport ATP-binding protein AraG (513 aa).

2 ABC transporter domains span residues 6-243 (LEMR…GMVG) and 264-508 (VKNW…TKTA). ATP is bound at residue 38-45 (GENGAGKS).

Belongs to the ABC transporter superfamily.

It localises to the cell membrane. It catalyses the reaction L-arabinose(out) + ATP + H2O = L-arabinose(in) + ADP + phosphate + H(+). In terms of biological role, part of the binding-protein-dependent transport system for L-arabinose. Probably responsible for energy coupling to the transport system. In Geobacillus stearothermophilus (Bacillus stearothermophilus), this protein is L-arabinose transport ATP-binding protein AraG (araG).